Here is a 343-residue protein sequence, read N- to C-terminus: Biotin synthase 2 (343 aa).

The Radical SAM core domain maps to 58–285 (NEVQLSTLLS…LTMVRLSAGR (228 aa)). Residues Cys-73, Cys-77, and Cys-80 each contribute to the [4Fe-4S] cluster site. Positions 117, 148, 208, and 280 each coordinate [2Fe-2S] cluster.

This sequence belongs to the radical SAM superfamily. Biotin synthase family. Homodimer. The cofactor is [4Fe-4S] cluster. It depends on [2Fe-2S] cluster as a cofactor.

It catalyses the reaction (4R,5S)-dethiobiotin + (sulfur carrier)-SH + 2 reduced [2Fe-2S]-[ferredoxin] + 2 S-adenosyl-L-methionine = (sulfur carrier)-H + biotin + 2 5'-deoxyadenosine + 2 L-methionine + 2 oxidized [2Fe-2S]-[ferredoxin]. The protein operates within cofactor biosynthesis; biotin biosynthesis; biotin from 7,8-diaminononanoate: step 2/2. Its function is as follows. Catalyzes the conversion of dethiobiotin (DTB) to biotin by the insertion of a sulfur atom into dethiobiotin via a radical-based mechanism. This is Biotin synthase 2 from Polaromonas sp. (strain JS666 / ATCC BAA-500).